We begin with the raw amino-acid sequence, 492 residues long: 5-taurinomethyluridine-[tRNA] synthase subunit GTPB3, mitochondrial (492 aa).

The N-terminal 20 residues, 1–20, are a transit peptide targeting the mitochondrion; that stretch reads MWRGLWTLAAQAARGPRRLC. Positions 52, 112, and 152 each coordinate 5,10-methylenetetrahydrofolate. The 168-residue stretch at 249 to 416 folds into the TrmE-type G domain; sequence GVHVVVTGPP…LLEALRKELA (168 aa). GTP contacts are provided by residues 256-263, 282-286, 303-306, 374-377, and 397-399; these read GPPNAGKS, GTTRD, DTAG, NKSD, and SCL. Asn-259 serves as a coordination point for K(+). Mg(2+)-binding residues include Ser-263 and Thr-284. Position 492 (Lys-492) interacts with 5,10-methylenetetrahydrofolate.

Belongs to the TRAFAC class TrmE-Era-EngA-EngB-Septin-like GTPase superfamily. TrmE GTPase family. As to quaternary structure, homodimer; forms a dimer in the presence of potassium. Interacts with MTO1; forms the GTPBP3-MTO1 complex composed of homodimers of GTPBP3 and MTO1. In terms of assembly, homodimer, forms homodimer in vivo. It depends on K(+) as a cofactor. In terms of tissue distribution, ubiquitously expressed.

It is found in the mitochondrion. The protein localises to the cytoplasm. The catalysed reaction is GTP + H2O = GDP + phosphate + H(+). Its function is as follows. GTPase component of the GTPBP3-MTO1 complex that catalyzes the 5-taurinomethyluridine (taum(5)U) modification at the 34th wobble position (U34) of mitochondrial tRNAs (mt-tRNAs), which plays a role in mt-tRNA decoding and mitochondrial translation. Taum(5)U formation on mammalian mt-tRNA requires the presence of both GTPBP3-mediated GTPase activity and MTO1 catalytic activity. This Homo sapiens (Human) protein is 5-taurinomethyluridine-[tRNA] synthase subunit GTPB3, mitochondrial.